A 219-amino-acid polypeptide reads, in one-letter code: 2-C-methyl-D-erythritol 4-phosphate cytidylyltransferase (219 aa).

The protein belongs to the IspD/TarI cytidylyltransferase family. IspD subfamily.

The catalysed reaction is 2-C-methyl-D-erythritol 4-phosphate + CTP + H(+) = 4-CDP-2-C-methyl-D-erythritol + diphosphate. The protein operates within isoprenoid biosynthesis; isopentenyl diphosphate biosynthesis via DXP pathway; isopentenyl diphosphate from 1-deoxy-D-xylulose 5-phosphate: step 2/6. Its function is as follows. Catalyzes the formation of 4-diphosphocytidyl-2-C-methyl-D-erythritol from CTP and 2-C-methyl-D-erythritol 4-phosphate (MEP). The chain is 2-C-methyl-D-erythritol 4-phosphate cytidylyltransferase from Endomicrobium trichonymphae.